The following is a 355-amino-acid chain: WAT1-related protein At3g28130 (355 aa).

10 helical membrane passes run 11–31, 42–62, 80–100, 104–124, 136–156, 186–206, 218–238, 244–264, 290–310, and 311–331; these read AVLL…NTLF, YTFL…SHIF, IGVL…GIEY, TLAS…AIIF, SVAK…VVLY, WIIG…AFIL, FTVS…IGIV, PSIW…GGIF, LSIL…FYLG, and SLVG…GKAK. Residues 29 to 154 form the EamA domain; sequence TLFKAATSKG…VSLVGALVVV (126 aa).

It belongs to the drug/metabolite transporter (DMT) superfamily. Plant drug/metabolite exporter (P-DME) (TC 2.A.7.4) family.

Its subcellular location is the membrane. The polypeptide is WAT1-related protein At3g28130 (Arabidopsis thaliana (Mouse-ear cress)).